The primary structure comprises 294 residues: Protease HtpX homolog (294 aa).

2 consecutive transmembrane segments (helical) span residues 12-32 (VLFG…ASSF) and 34-54 (SPGV…YSYW). His-138 contributes to the Zn(2+) binding site. Residue Glu-139 is part of the active site. Position 142 (His-142) interacts with Zn(2+). 2 helical membrane passes run 152–172 (SVAG…VFFG) and 188–208 (LALL…QLAI). Residue Glu-213 coordinates Zn(2+).

Belongs to the peptidase M48B family. Requires Zn(2+) as cofactor.

It is found in the cell membrane. The protein is Protease HtpX homolog of Kineococcus radiotolerans (strain ATCC BAA-149 / DSM 14245 / SRS30216).